The following is a 147-amino-acid chain: 3-hydroxyacyl-[acyl-carrier-protein] dehydratase FabZ (147 aa).

The active site involves H46.

The protein belongs to the thioester dehydratase family. FabZ subfamily.

It is found in the cytoplasm. The catalysed reaction is a (3R)-hydroxyacyl-[ACP] = a (2E)-enoyl-[ACP] + H2O. Involved in unsaturated fatty acids biosynthesis. Catalyzes the dehydration of short chain beta-hydroxyacyl-ACPs and long chain saturated and unsaturated beta-hydroxyacyl-ACPs. The protein is 3-hydroxyacyl-[acyl-carrier-protein] dehydratase FabZ of Syntrophobacter fumaroxidans (strain DSM 10017 / MPOB).